Reading from the N-terminus, the 451-residue chain is Coproporphyrinogen III oxidase (451 aa).

FAD-binding positions include 10 to 15 (GGGISG), 36 to 37 (DP), 58 to 61 (GAEA), V242, W393, and 429 to 431 (IGV).

It belongs to the protoporphyrinogen/coproporphyrinogen oxidase family. Coproporphyrinogen III oxidase subfamily. The cofactor is FAD.

The protein localises to the cytoplasm. The enzyme catalyses coproporphyrinogen III + 3 O2 = coproporphyrin III + 3 H2O2. Its pathway is porphyrin-containing compound metabolism; protoheme biosynthesis. Its function is as follows. Involved in coproporphyrin-dependent heme b biosynthesis. Catalyzes the oxidation of coproporphyrinogen III to coproporphyrin III. In Mycobacterium leprae (strain TN), this protein is Coproporphyrinogen III oxidase.